Consider the following 20-residue polypeptide: Unknown protein from 2D-PAGE (20 aa).

This Nicotiana tabacum (Common tobacco) protein is Unknown protein from 2D-PAGE.